Consider the following 344-residue polypeptide: tRNA N6-adenosine threonylcarbamoyltransferase (344 aa).

Positions 112 and 116 each coordinate Fe cation. Substrate is bound by residues 134-138 (LASGG), D167, G180, and N280. D308 provides a ligand contact to Fe cation.

It belongs to the KAE1 / TsaD family. The cofactor is Fe(2+).

Its subcellular location is the cytoplasm. It catalyses the reaction L-threonylcarbamoyladenylate + adenosine(37) in tRNA = N(6)-L-threonylcarbamoyladenosine(37) in tRNA + AMP + H(+). Required for the formation of a threonylcarbamoyl group on adenosine at position 37 (t(6)A37) in tRNAs that read codons beginning with adenine. Is involved in the transfer of the threonylcarbamoyl moiety of threonylcarbamoyl-AMP (TC-AMP) to the N6 group of A37, together with TsaE and TsaB. TsaD likely plays a direct catalytic role in this reaction. This is tRNA N6-adenosine threonylcarbamoyltransferase from Rickettsia massiliae (strain Mtu5).